We begin with the raw amino-acid sequence, 783 residues long: MTTNLYAIAGPSKPTTPTSTPSPRSEPPSPLKSLTSLPTNPLNSHGTSTPNTLTNQLSSTGIGISKPGLSVDENGEVMKVPAFLNKLYTMVSDPEVDDLIYWGESGDSFFVPNAELFGRELLPRWFKHSNFSSFVRQLNMYGFHKVPHLQSGALKNETPIELWEFANPYFKRGQPQLLTKVTRKNNRPSNSGVGPSSSVGGSGAGGGMSTRSASAAAASGSASGQIQQAISQGHEAGNHSTSGKYLITDGTTPGSVPPSHTSAGPLIAPQTLDLSAINSGIAAIRQTQASIATDLRKLQASNEALWRQAYETQEKQRKHEETIDLIVSFLERLFGTEGEGLKGLKEAMRRGVGVRRDRDGREGRDSRDSRFAEDDDGGQKKRRRVGIDRMIEGGTGDGTGEHGEIESPTSDDRLVEIGSNSEYSIPSVKRTSSSSHPISLGQLGSSRFTALPSEDPSPSASGPGSTSYEGLHTTQTNARGAGADVNVTDPTLGMNHLSPLSDTDPLLPSSSNALAPYSSHLPFPSSNSNQSNSFNPSNPSSAWASNPSQPLLSPTSAAAAAHAYNLDPSLLQTTIGSLLQSPAAAQMFLNSLSASAQGQALASHSHPHNPSPLNPNPNGNASTSASASAHGMNTGGMGTGSGTKDVDPTLALFSPLPSHSSLTSQSNDLLKSYSDALTVGEGVDNLQESIDSLVRSMGLDLPNGGSSVGVDVGDGAGVGTETGEGDGEFNVDEFLQGLAKEGEEEGEREVEGDGGVSSSGAGAGAENGRKEDVIAQSGLKSES.

The disordered stretch occupies residues Met-1 to Ser-59. 2 stretches are compositionally biased toward low complexity: residues Pro-11–Pro-23 and Leu-31–Leu-42. Positions Asn-43–Ser-59 are enriched in polar residues. A DNA-binding region spans residues Met-78–Pro-168. Residues Val-181–Ser-262 are disordered. Composition is skewed to low complexity over residues Ser-189 to Val-199 and Ser-209 to Gly-233. Polar residues predominate over residues Asn-238–Ser-262. The interval Gly-280–Leu-333 is involved in trimerization. Composition is skewed to basic and acidic residues over residues Arg-350 to Ala-372 and Thr-399 to Val-415. Disordered stretches follow at residues Arg-350–Pro-554, Gln-599–Leu-652, and Gln-736–Ser-783. Positions Gly-418 to Phe-448 are enriched in polar residues. Composition is skewed to low complexity over residues Pro-452 to Ser-467, Leu-497 to Ser-511, Pro-522 to Pro-550, and Asn-616 to Met-632. Over residues Gly-742 to Gly-752 the composition is skewed to acidic residues. Over residues Asp-753 to Ala-765 the composition is skewed to gly residues.

It belongs to the HSF family. In terms of assembly, homotrimer. Homotrimerization increases the affinity of HSF1 to DNA. Interacts with transcriptional coregulator SSA1 on chromatin.

Its subcellular location is the nucleus. In terms of biological role, DNA-binding transcription factor that specifically binds heat shock promoter elements (HSE) and activates transcription. Together with its coregulator SSA1, activates expression of laccase LAC1 during glucose starvation. This chain is Heat shock transcription factor, found in Cryptococcus neoformans var. neoformans serotype D (strain JEC21 / ATCC MYA-565) (Filobasidiella neoformans).